A 364-amino-acid polypeptide reads, in one-letter code: UDP-N-acetylglucosamine--N-acetylmuramyl-(pentapeptide) pyrophosphoryl-undecaprenol N-acetylglucosamine transferase (364 aa).

UDP-N-acetyl-alpha-D-glucosamine-binding positions include 13–15 (TGG), Asn-125, Arg-165, Ser-192, and Gln-293.

This sequence belongs to the glycosyltransferase 28 family. MurG subfamily.

It is found in the cell inner membrane. The catalysed reaction is di-trans,octa-cis-undecaprenyl diphospho-N-acetyl-alpha-D-muramoyl-L-alanyl-D-glutamyl-meso-2,6-diaminopimeloyl-D-alanyl-D-alanine + UDP-N-acetyl-alpha-D-glucosamine = di-trans,octa-cis-undecaprenyl diphospho-[N-acetyl-alpha-D-glucosaminyl-(1-&gt;4)]-N-acetyl-alpha-D-muramoyl-L-alanyl-D-glutamyl-meso-2,6-diaminopimeloyl-D-alanyl-D-alanine + UDP + H(+). The protein operates within cell wall biogenesis; peptidoglycan biosynthesis. Functionally, cell wall formation. Catalyzes the transfer of a GlcNAc subunit on undecaprenyl-pyrophosphoryl-MurNAc-pentapeptide (lipid intermediate I) to form undecaprenyl-pyrophosphoryl-MurNAc-(pentapeptide)GlcNAc (lipid intermediate II). In Cereibacter sphaeroides (strain ATCC 17029 / ATH 2.4.9) (Rhodobacter sphaeroides), this protein is UDP-N-acetylglucosamine--N-acetylmuramyl-(pentapeptide) pyrophosphoryl-undecaprenol N-acetylglucosamine transferase.